A 221-amino-acid polypeptide reads, in one-letter code: Ribonuclease S-2 (221 aa).

The N-terminal stretch at 1–20 is a signal peptide; that stretch reads MIYIFTMVFSLNVLILSSSA. Glutamine 31 contributes to the RNA binding site. Cysteine 37 and cysteine 44 are oxidised to a cystine. Residues histidine 55, 91-92, phenylalanine 101, 104-105, and 108-109 contribute to the RNA site; these read NV, KQ, and KH. The active-site Proton donor is the histidine 55. The cysteines at positions 70 and 112 are disulfide-linked. Residue asparagine 91 is glycosylated (N-linked (GlcNAc...) asparagine). Glutamine 105 is a catalytic residue. Histidine 109 functions as the Proton acceptor in the catalytic mechanism. N-linked (GlcNAc...) asparagine glycans are attached at residues asparagine 137, asparagine 153, and asparagine 195. 2 cysteine pairs are disulfide-bonded: cysteine 176–cysteine 214 and cysteine 191–cysteine 202.

The protein belongs to the RNase T2 family. N-linked core structure at Asn-91, Asn-137, and Asn-153 contains xylose and at Asn-195 contains xylose and fucose.

It is found in the secreted. Its subcellular location is the extracellular space. The enzyme catalyses a ribonucleotidyl-ribonucleotide-RNA + H2O = a 3'-end 3'-phospho-ribonucleotide-RNA + a 5'-end dephospho-ribonucleoside-RNA + H(+). Functionally, self-incompatibility (SI) is the inherited ability of a flowering plant to prevent self-fertilization by discriminating between self and non-self pollen during pollination. In many species, self-incompatibility is controlled by the single, multiallelic locus S. The sequence is that of Ribonuclease S-2 from Pyrus pyrifolia (Chinese pear).